The chain runs to 447 residues: NADP-specific glutamate dehydrogenase (447 aa).

Lys-92, Gln-113, and Lys-116 together coordinate substrate. Residue Lys-128 is the Proton donor of the active site. Gly-167 is a substrate binding site. Positions 211 and 242 each coordinate NADP(+). A substrate-binding site is contributed by Ser-380.

This sequence belongs to the Glu/Leu/Phe/Val dehydrogenases family. In terms of assembly, homohexamer.

The enzyme catalyses L-glutamate + NADP(+) + H2O = 2-oxoglutarate + NH4(+) + NADPH + H(+). Competitively inhibited by homoserine and by glutamine. Its function is as follows. Catalyzes the reversible oxidative deamination of glutamate to alpha-ketoglutarate and ammonia. The chain is NADP-specific glutamate dehydrogenase from Escherichia coli (strain K12).